Consider the following 451-residue polypeptide: Tubulin alpha-1 chain (451 aa).

Gln11 provides a ligand contact to GTP. Lys40 is modified (N6-acetyllysine). Glu71, Gly144, Thr145, Thr179, Asn206, and Asn228 together coordinate GTP. Residue Glu71 coordinates Mg(2+). The active site involves Glu254.

This sequence belongs to the tubulin family. As to quaternary structure, dimer of alpha and beta chains. A typical microtubule is a hollow water-filled tube with an outer diameter of 25 nm and an inner diameter of 15 nM. Alpha-beta heterodimers associate head-to-tail to form protofilaments running lengthwise along the microtubule wall with the beta-tubulin subunit facing the microtubule plus end conferring a structural polarity. Microtubules usually have 13 protofilaments but different protofilament numbers can be found in some organisms and specialized cells. Mg(2+) serves as cofactor. In terms of processing, undergoes a tyrosination/detyrosination cycle, the cyclic removal and re-addition of a C-terminal tyrosine residue by the enzymes tubulin tyrosine carboxypeptidase (TTCP) and tubulin tyrosine ligase (TTL), respectively. Acetylation of alpha chains at Lys-40 stabilizes microtubules and affects affinity and processivity of microtubule motors. This modification has a role in multiple cellular functions, ranging from cell motility, cell cycle progression or cell differentiation to intracellular trafficking and signaling.

It localises to the cytoplasm. Its subcellular location is the cytoskeleton. The catalysed reaction is GTP + H2O = GDP + phosphate + H(+). Tubulin is the major constituent of microtubules, a cylinder consisting of laterally associated linear protofilaments composed of alpha- and beta-tubulin heterodimers. Microtubules grow by the addition of GTP-tubulin dimers to the microtubule end, where a stabilizing cap forms. Below the cap, tubulin dimers are in GDP-bound state, owing to GTPase activity of alpha-tubulin. The polypeptide is Tubulin alpha-1 chain (TUBA1) (Chlamydomonas reinhardtii (Chlamydomonas smithii)).